We begin with the raw amino-acid sequence, 182 residues long: Adenine phosphoribosyltransferase (182 aa).

Belongs to the purine/pyrimidine phosphoribosyltransferase family. As to quaternary structure, homodimer.

The protein resides in the cytoplasm. It carries out the reaction AMP + diphosphate = 5-phospho-alpha-D-ribose 1-diphosphate + adenine. Its pathway is purine metabolism; AMP biosynthesis via salvage pathway; AMP from adenine: step 1/1. Functionally, catalyzes a salvage reaction resulting in the formation of AMP, that is energically less costly than de novo synthesis. This Streptomyces coelicolor (strain ATCC BAA-471 / A3(2) / M145) protein is Adenine phosphoribosyltransferase.